The chain runs to 151 residues: 3-dehydroquinate dehydratase 1 (151 aa).

Tyrosine 23 acts as the Proton acceptor in catalysis. Asparagine 75, histidine 81, and aspartate 88 together coordinate substrate. Histidine 101 serves as the catalytic Proton donor. Residues 102 to 103 (LS) and arginine 112 contribute to the substrate site.

Belongs to the type-II 3-dehydroquinase family. Homododecamer.

It carries out the reaction 3-dehydroquinate = 3-dehydroshikimate + H2O. It functions in the pathway metabolic intermediate biosynthesis; chorismate biosynthesis; chorismate from D-erythrose 4-phosphate and phosphoenolpyruvate: step 3/7. Catalyzes a trans-dehydration via an enolate intermediate. The polypeptide is 3-dehydroquinate dehydratase 1 (aroQ1) (Pseudomonas putida (strain ATCC 47054 / DSM 6125 / CFBP 8728 / NCIMB 11950 / KT2440)).